Here is a 158-residue protein sequence, read N- to C-terminus: SsrA-binding protein (158 aa).

It belongs to the SmpB family.

Its subcellular location is the cytoplasm. Required for rescue of stalled ribosomes mediated by trans-translation. Binds to transfer-messenger RNA (tmRNA), required for stable association of tmRNA with ribosomes. tmRNA and SmpB together mimic tRNA shape, replacing the anticodon stem-loop with SmpB. tmRNA is encoded by the ssrA gene; the 2 termini fold to resemble tRNA(Ala) and it encodes a 'tag peptide', a short internal open reading frame. During trans-translation Ala-aminoacylated tmRNA acts like a tRNA, entering the A-site of stalled ribosomes, displacing the stalled mRNA. The ribosome then switches to translate the ORF on the tmRNA; the nascent peptide is terminated with the 'tag peptide' encoded by the tmRNA and targeted for degradation. The ribosome is freed to recommence translation, which seems to be the essential function of trans-translation. In Psychrobacter sp. (strain PRwf-1), this protein is SsrA-binding protein.